Here is a 48-residue protein sequence, read N- to C-terminus: Fimbrial assembly protein, serogroup F1 (48 aa).

In Dichelobacter nodosus (Bacteroides nodosus), this protein is Fimbrial assembly protein, serogroup F1 (fimB).